A 393-amino-acid polypeptide reads, in one-letter code: Riboflavin biosynthesis protein RibBA (393 aa).

The DHBP synthase stretch occupies residues 1–200 (MQFDNIDSAL…IDDLIEYRKK (200 aa)). Residues 27 to 28 (RE), aspartate 32, 139 to 143 (RNGHT), and glutamate 163 contribute to the D-ribulose 5-phosphate site. Mg(2+) is bound at residue glutamate 28. Histidine 142 is a binding site for Mg(2+). Positions 201–393 (LEPEIEFKAK…TKKIKMGHLI (193 aa)) are GTP cyclohydrolase II. A GTP-binding site is contributed by 249 to 253 (RLHSA). The Zn(2+) site is built by cysteine 254, cysteine 265, and cysteine 267. GTP-binding positions include glutamine 270, 291–293 (EGR), and threonine 313. Catalysis depends on aspartate 325, which acts as the Proton acceptor; for GTP cyclohydrolase activity. Residue arginine 327 is the Nucleophile; for GTP cyclohydrolase activity of the active site. Serine 348 and lysine 353 together coordinate GTP.

This sequence in the N-terminal section; belongs to the DHBP synthase family. It in the C-terminal section; belongs to the GTP cyclohydrolase II family. It depends on Mg(2+) as a cofactor. The cofactor is Mn(2+). Zn(2+) is required as a cofactor.

It carries out the reaction D-ribulose 5-phosphate = (2S)-2-hydroxy-3-oxobutyl phosphate + formate + H(+). It catalyses the reaction GTP + 4 H2O = 2,5-diamino-6-hydroxy-4-(5-phosphoribosylamino)-pyrimidine + formate + 2 phosphate + 3 H(+). Its pathway is cofactor biosynthesis; riboflavin biosynthesis; 2-hydroxy-3-oxobutyl phosphate from D-ribulose 5-phosphate: step 1/1. It participates in cofactor biosynthesis; riboflavin biosynthesis; 5-amino-6-(D-ribitylamino)uracil from GTP: step 1/4. Its function is as follows. Catalyzes the conversion of D-ribulose 5-phosphate to formate and 3,4-dihydroxy-2-butanone 4-phosphate. Functionally, catalyzes the conversion of GTP to 2,5-diamino-6-ribosylamino-4(3H)-pyrimidinone 5'-phosphate (DARP), formate and pyrophosphate. This Staphylococcus aureus (strain MSSA476) protein is Riboflavin biosynthesis protein RibBA.